A 444-amino-acid polypeptide reads, in one-letter code: Tol-Pal system protein TolB (444 aa).

An N-terminal signal peptide occupies residues 1–19; the sequence is MRNIIYFILSLLFSVTSYA.

It belongs to the TolB family. As to quaternary structure, the Tol-Pal system is composed of five core proteins: the inner membrane proteins TolA, TolQ and TolR, the periplasmic protein TolB and the outer membrane protein Pal. They form a network linking the inner and outer membranes and the peptidoglycan layer.

It is found in the periplasm. In terms of biological role, part of the Tol-Pal system, which plays a role in outer membrane invagination during cell division and is important for maintaining outer membrane integrity. This is Tol-Pal system protein TolB from Rickettsia rickettsii (strain Sheila Smith).